The chain runs to 341 residues: Arfaptin-2 (341 aa).

Residues 46-84 form a disordered region; sequence NETSIVSGGYGGSGDGLIPTGSGRHPSHSTSPSGPGDEV. Over residues 65–81 the composition is skewed to low complexity; the sequence is TGSGRHPSHSTSPSGPG. S72 carries the post-translational modification Phosphoserine. In terms of domain architecture, AH spans 121-321; it reads TVDLELELQI…NQKQLEQTLQ (201 aa).

In terms of assembly, forms homodimers or heterodimers with ARFIP1. Interacts with RAC1. Specifically binds to GTP-bound ARF1 and ARF6, but binds to RAC1.GTP and RAC1.GDP with similar affinities. Interacts with ARL1. Interacts (via N-terminus) with IKBKB and IKBKG; these interactions inhibit activation of NF-kappa-B.

The protein resides in the golgi apparatus. It localises to the trans-Golgi network membrane. Its function is as follows. Plays a role in constitutive metalloproteinase (MMP) secretion from the trans Golgi network. May have important functions during vesicle biogenesis at certain cargo subdomains, which could be predominantly utilized by secreted MMPs, such as MMP7 and MMP2. Also involved in autophagy by regulating the starvation-dependent trafficking of ATG9A vesicles which deliver the phosphatidylinositol 4-kinase beta (PI4KB) to the autophagosome initiation site. Involved in phagophore growth during mitophagy by regulating ATG9A trafficking to mitochondria. In addition, plays a role in NF-kappa-B inhibition by interacting with IKBKB and IKBKG. The chain is Arfaptin-2 from Mus musculus (Mouse).